A 123-amino-acid chain; its full sequence is ATP synthase epsilon chain (123 aa).

This sequence belongs to the ATPase epsilon chain family. F-type ATPases have 2 components, CF(1) - the catalytic core - and CF(0) - the membrane proton channel. CF(1) has five subunits: alpha(3), beta(3), gamma(1), delta(1), epsilon(1). CF(0) has three main subunits: a, b and c.

The protein localises to the cell inner membrane. In terms of biological role, produces ATP from ADP in the presence of a proton gradient across the membrane. The protein is ATP synthase epsilon chain (atpC) of Helicobacter pylori (strain ATCC 700392 / 26695) (Campylobacter pylori).